The sequence spans 381 residues: Chorismate synthase (381 aa).

NADP(+)-binding residues include R41 and R47. FMN contacts are provided by residues 127-129 (RAS), 247-248 (QA), G291, 306-310 (KPIPT), and R332.

The protein belongs to the chorismate synthase family. Homotetramer. The cofactor is FMNH2.

It catalyses the reaction 5-O-(1-carboxyvinyl)-3-phosphoshikimate = chorismate + phosphate. It functions in the pathway metabolic intermediate biosynthesis; chorismate biosynthesis; chorismate from D-erythrose 4-phosphate and phosphoenolpyruvate: step 7/7. Functionally, catalyzes the anti-1,4-elimination of the C-3 phosphate and the C-6 proR hydrogen from 5-enolpyruvylshikimate-3-phosphate (EPSP) to yield chorismate, which is the branch point compound that serves as the starting substrate for the three terminal pathways of aromatic amino acid biosynthesis. This reaction introduces a second double bond into the aromatic ring system. This Anaeromyxobacter sp. (strain K) protein is Chorismate synthase.